The chain runs to 306 residues: uncharacterized protein (306 aa).

This sequence to L.delbrueckii similar ORF in glnA 5'region.

This is an uncharacterized protein from Lactobacillus delbrueckii subsp. bulgaricus.